The sequence spans 153 residues: Large ribosomal subunit protein uL15 (153 aa).

Residues 21–42 (RGIGSGKGKTGGRGIKGQKSRS) form a disordered region. The segment covering 23–35 (IGSGKGKTGGRGI) has biased composition (gly residues).

The protein belongs to the universal ribosomal protein uL15 family. In terms of assembly, part of the 50S ribosomal subunit.

Functionally, binds to the 23S rRNA. This is Large ribosomal subunit protein uL15 from Rickettsia peacockii (strain Rustic).